An 836-amino-acid chain; its full sequence is MLLSTWTPGCFQGNKILLRSLITWYYLEFMPKLRPFYFLFYLTLPSCATDSPPISDKSSSIFLPLAQQQQLVHWMMPPRFRCQDYLLPLLLALSPAAAAAREVEYHHCHCDGGGGGGGGGLWSMDSIFRWQKVSDLLIAAAYFSIPLEILYFVAGLRHLLPFRWVLVQFGAFIVLCGLTHLLTAFTYEPHPFMVVLLLTTAKFLTALVSFLTAITLLTLIPQLLRVKVRESLLWLKARELDREVVLMKRQEEASWHVRMLTHEIRKSLDRHTVLYTTLIELSRVLGLTNCAVWMPAAGEMCLTHELRRDGGGEDGVVGVDDADVVEVRGSDGVKLLGPDSVLAAASGGKEEGTGAVAAIRMPMLKVSDFKGGTPEVIQTSYAVLVLVPPAGKSWGRHEMEIVEVVAGQVAVALSHATLLEESRAMRDRLAEQNRELLQARRDALMANEARQAFQGVMSQGMRRPIHSILGLVSMVQEEALAPEQRLVVDTMARTATVVSTLVNDVMEMSADSRERFPLETRPFHLHAMIRDAACVARCLCDFRGFGFAVHVENALPDLVVGDERRIFHVLLHMVGNLIGRTEPGHVTLRVRAADDDVLDDRLGQRWDPWWPSYSTGYSSVKFVIGVKRQQNGDAGSPLSRRPSGKGIDLRLSFSMCRKLVQMMQGNIWAILDPQGLPESMTLVLRFQLQSPLTSSSLGGSFEQKHSSPSCQIAGLKVLLIDDDDDINLVVARKLLEKLGCVVSSPPSGSGFLSSVGSSAAAFQLVMVNLEMKRVKALDVATRISQYRSGRWPIVMAMASDQKAWEKCAQSGINGILKKPVILQELKDELARILQST.

Helical transmembrane passes span 137–157, 166–186, and 204–224; these read LIAA…AGLR, LVQF…TAFT, and LTAL…PQLL. Cu cation is bound by residues cysteine 176 and histidine 180. Positions 269-413 constitute a GAF domain; sequence DRHTVLYTTL…VVAGQVAVAL (145 aa). Positions 416–452 form a coiled coil; it reads ATLLEESRAMRDRLAEQNRELLQARRDALMANEARQA. In terms of domain architecture, Histidine kinase spans 457–691; that stretch reads MSQGMRRPIH…LVLRFQLQSP (235 aa). Residues 718 to 834 form the Response regulatory domain; the sequence is LLIDDDDDIN…LKDELARILQ (117 aa).

It belongs to the ethylene receptor family. Requires Cu cation as cofactor.

It localises to the endoplasmic reticulum membrane. The catalysed reaction is ATP + protein L-histidine = ADP + protein N-phospho-L-histidine.. Its function is as follows. Ethylene receptor related to bacterial two-component regulators. Acts as a negative regulator of ethylene signaling. May delay the transition from the vegetative stage to the floral stage by up-regulating GI (GIGANTEA) and RCN1 and cause starch accumulation in stems by down-regulating the alpha-amylase AMY3D. This Oryza sativa subsp. japonica (Rice) protein is Ethylene receptor 3 (ETR3).